The primary structure comprises 522 residues: Protein tweety homolog 3 (522 aa).

Residues 1-43 lie on the Extracellular side of the membrane; that stretch reads MAAAISYTPPWWVNLLHRLPHLNLQWESLNGDFRPEDPDYQQS. The helical transmembrane segment at 44 to 64 threads the bilayer; the sequence is LMLLACVALSCLALDLLFLLF. At 65 to 87 the chain is on the cytoplasmic side; that stretch reads YSFWFCCRHRKTEENTNADCCCT. Residues 88-108 traverse the membrane as a helical segment; it reads VWCVIVATLVCSAGIAVGFYG. Residues 109–211 lie on the Extracellular side of the membrane; that stretch reads NGETSDGIHR…VDLFDWYRWL (103 aa). Residues Glu-111 and Asp-114 each contribute to the Ca(2+) site. Asn-127 and Asn-145 each carry an N-linked (GlcNAc...) asparagine glycan. A helical membrane pass occupies residues 212–232; it reads GYLGLLLFHVFICLLVLFGLI. Residues 233-238 are Cytoplasmic-facing; that stretch reads RNSKGT. Residues 239-259 traverse the membrane as a helical segment; sequence LICVCFLGMMALIISWASMGL. The Extracellular portion of the chain corresponds to 260-386; sequence ELAVAVGSSD…LTGFCYDGVE (127 aa). Intrachain disulfides connect Cys-271-Cys-381 and Cys-299-Cys-366. An N-linked (GlcNAc...) asparagine glycan is attached at Asn-351. A helical membrane pass occupies residues 387 to 407; the sequence is GLIYLVLFSFVTALMFSSIVC. Over 408–522 the chain is Cytoplasmic; sequence SVPHTWQQRR…TNRPETDPVH (115 aa). A disordered region spans residues 483–522; the sequence is QNPRCENTPLIGRESPPPSYTSSMRAKYLATNRPETDPVH.

It belongs to the tweety family. Homotetramer; disulfide-linked. Forms cis-homodimers in the presence of Ca(2+).

Its subcellular location is the cell membrane. It catalyses the reaction chloride(in) = chloride(out). The catalysed reaction is L-glutamate(out) = L-glutamate(in). In terms of biological role, may act as a calcium-independent, swelling-dependent volume-regulated anion channel (VRAC-swell) which plays a pivotal role in the process of regulatory volume decrease (RVD) in the brain through the efflux of anions like chloride and organic osmolytes like glutamate. Probable large-conductance Ca(2+)-activated chloride channel. In Xenopus laevis (African clawed frog), this protein is Protein tweety homolog 3 (ttyh3).